The chain runs to 1839 residues: DNA-directed RNA polymerase II subunit RPB1 (1839 aa).

The Zn(2+) site is built by C66, C69, C76, H79, C106, C109, and C147. The tract at residues 152 to 174 (DIDDVQSHSTDEPVKKSRGGCGA) is disordered. Basic and acidic residues predominate over residues 156-166 (VQSHSTDEPVK). C172 contributes to the Zn(2+) binding site. Residues 326–397 (TQKSGRPIKS…PETVTPYNIE (72 aa)) mediate DNA binding. Mg(2+)-binding residues include D495, D497, and D499. The interval 785–795 (GQQNVEGKRIP) is alpha-amanitin binding. Positions 829–841 (PQEFFFHAMGGRE) are bridging helix. Residues 1538-1726 (PSSSPGYSPS…PSYGPTSPSY (189 aa)) show a composition bias toward low complexity. The disordered stretch occupies residues 1538 to 1839 (PSSSPGYSPS…DASKDDKGNP (302 aa)). 27 repeat units span residues 1544-1550 (YSPSSPG), 1551-1557 (YSPTSPG), 1558-1564 (YSPTSPG), 1565-1571 (YSPTSPG), 1572-1578 (YSPTSPT), 1579-1585 (YSPSSPG), 1586-1592 (YSPTSPA), 1593-1599 (YSPTSPS), 1600-1606 (YSPTSPS), 1607-1613 (YSPTSPS), 1614-1620 (YSPTSPS), 1621-1627 (YSPTSPS), 1628-1634 (YSPTSPS), 1635-1641 (YSPTSPA), 1642-1648 (YSPTSPA), 1649-1655 (YSPTSPA), 1656-1662 (YSPTSPS), 1663-1669 (YSPTSPS), 1670-1676 (YSPTSPS), 1677-1683 (YSPTSPS), 1684-1690 (YSPTSPS), 1691-1697 (YSPTSPA), 1698-1704 (YSPTSPG), 1705-1711 (YSPTSPS), 1712-1718 (YSPTSPS), 1719-1725 (YGPTSPS), and 1726-1732 (YNPQSAK). The segment at 1544–1813 (YSPSSPGYSP…LPGYSPSSTG (270 aa)) is C-terminal domain (CTD); 37 X 7 AA tandem approximate repeats of Y-[GNS]-P-[QST]-[LNS]-[APT]-[AGKNRSTY]. The span at 1727–1745 (NPQSAKYSPSIAYSPSNAR) shows a compositional bias: polar residues. The stretch at 1733 to 1738 (YSPSIA) is one 28; approximate repeat. A run of 6 repeats spans residues 1739–1745 (YSPSNAR), 1752–1758 (YSPTSPN), 1759–1765 (YSPTSPS), 1766–1772 (YSPTSPS), 1773–1779 (YSPSSPT), and 1780–1786 (YSPSSPY). Residues 1747-1798 (SPASPYSPTSPNYSPTSPSYSPTSPSYSPSSPTYSPSSPYSSGASPDYSPSA) show a composition bias toward low complexity. One copy of the 35; approximate repeat lies at 1794–1799 (YSPSAG). 2 consecutive repeat copies span residues 1800-1806 (YSPTLPG) and 1807-1813 (YSPSSTG). A compositionally biased stretch (basic and acidic residues) spans 1818 to 1839 (HEGDKKDKTGKKDASKDDKGNP).

It belongs to the RNA polymerase beta' chain family. As to quaternary structure, component of the RNA polymerase II (Pol II) complex consisting of at least 12 subunits. Interacts with RDM1. Interacts (via CTD) with PRP40A, PRP40B, PRP40C and CYP59. Interacts with MEE12/CCG1 and MEE14/CBP1. Binds (via CTD) to ATX1, especially when phosphorylated on 'Ser-5' of the heptapeptide repeat. The tandem 7 residues repeats in the C-terminal domain (CTD) can be highly phosphorylated. The phosphorylation activates Pol II. Phosphorylation occurs mainly at residues 'Ser-2' and 'Ser-5' of the heptapeptide repeat. The phosphorylation state is believed to result from the balanced action of site-specific CTD kinases and phosphatase, and a 'CTD code' that specifies the position of Pol II within the transcription cycle has been proposed. ATX1 seems to regulate phosphorylation statment. 'Ser-2' and 'Ser-5' phosphorylation are repressed by flavopiridol (Flap) and seliciclib (Selic), inhibitors of CDK7 and CDK9.

It localises to the nucleus. The enzyme catalyses RNA(n) + a ribonucleoside 5'-triphosphate = RNA(n+1) + diphosphate. Its function is as follows. DNA-dependent RNA polymerase catalyzes the transcription of DNA into RNA using the four ribonucleoside triphosphates as substrates. Largest and catalytic component of RNA polymerase II which synthesizes mRNA precursors and many functional non-coding RNAs. Forms the polymerase active center together with the second largest subunit. Pol II is the central component of the basal RNA polymerase II transcription machinery. It is composed of mobile elements that move relative to each other. NRPB1 is part of the core element with the central large cleft, the clamp element that moves to open and close the cleft and the jaws that are thought to grab the incoming DNA template. At the start of transcription, a single-stranded DNA template strand of the promoter is positioned within the central active site cleft of Pol II. A bridging helix emanates from NRPB1 and crosses the cleft near the catalytic site and is thought to promote translocation of Pol II by acting as a ratchet that moves the RNA-DNA hybrid through the active site by switching from straight to bent conformations at each step of nucleotide addition. During transcription elongation, Pol II moves on the template as the transcript elongates. Elongation is influenced by the phosphorylation status of the C-terminal domain (CTD) of Pol II largest subunit (NRPB1), which serves as a platform for assembly of factors that regulate transcription initiation, elongation, termination and mRNA processing. The sequence is that of DNA-directed RNA polymerase II subunit RPB1 from Arabidopsis thaliana (Mouse-ear cress).